Here is a 213-residue protein sequence, read N- to C-terminus: High frequency lysogenization protein HflD homolog (213 aa).

This sequence belongs to the HflD family.

The protein resides in the cytoplasm. It localises to the cell inner membrane. This is High frequency lysogenization protein HflD homolog from Alcanivorax borkumensis (strain ATCC 700651 / DSM 11573 / NCIMB 13689 / SK2).